Consider the following 769-residue polypeptide: Wall-associated receptor kinase-like 10 (769 aa).

The N-terminal stretch at Met1–Ala24 is a signal peptide. Over Ser25 to Pro358 the chain is Extracellular. 8 N-linked (GlcNAc...) asparagine glycosylation sites follow: Asn58, Asn114, Asn134, Asn182, Asn187, Asn237, Asn262, and Asn296. An atypical EGF-like region spans residues Cys291–Cys351. 3 disulfides stabilise this stretch: Cys293-Cys305, Cys327-Cys342, and Cys337-Cys351. A helical transmembrane segment spans residues Leu359–Leu379. Topologically, residues Tyr380 to Arg769 are cytoplasmic. Residues Phe433–Glu718 form the Protein kinase domain. Residues Leu439–Val447 and Lys461 contribute to the ATP site. Residue Tyr506 is modified to Phosphotyrosine. Catalysis depends on Asp559, which acts as the Proton acceptor. Thr593 and Thr598 each carry phosphothreonine. The residue at position 606 (Tyr606) is a Phosphotyrosine.

Belongs to the protein kinase superfamily. Ser/Thr protein kinase family.

It is found in the membrane. The catalysed reaction is L-seryl-[protein] + ATP = O-phospho-L-seryl-[protein] + ADP + H(+). The enzyme catalyses L-threonyl-[protein] + ATP = O-phospho-L-threonyl-[protein] + ADP + H(+). Serine/threonine-protein kinase that may function as a signaling receptor of extracellular matrix component. This Arabidopsis thaliana (Mouse-ear cress) protein is Wall-associated receptor kinase-like 10 (WAKL10).